The chain runs to 334 residues: MRKVVLITGASSGIGLALCGRLLAEDDDLHLCLACRNLSKAGAVRDALLASHPSAEVSIVQMDVSNLQSVVRGAEEVKRRFQRLDYLYLNAGIMPNPQLNLKAFFCGIFSRNVIHMFSTAEGLLTQNDKITADGFQEVFETNLFGHFILIRELEPLLCHSDNPSQLIWTSSRNAKKSNFSLEDIQHAKGQEPYSSSKYATDLLNVALNRNFNQKGLYSSVTCPGVVMTNLTYGILPPFVWTLLLPVIWLLRFFAHAFTVTPYNGAEALVWLFHQKPESLNPLTKYLSGTTGLGTNYVKGQKMDVDEDTAEKFYKTLLELEKQVRITIQKSDHHS.

Residues Met-1–Asn-229 lie on the Extracellular side of the membrane. Thr-8–Gly-15 contributes to the NAD(+) binding site. A glycan (N-linked (GlcNAc...) asparagine) is linked at Asn-37. Position 171 (Ser-171) interacts with substrate. The N-linked (GlcNAc...) asparagine glycan is linked to Asn-178. Tyr-193 (proton acceptor) is an active-site residue. An N-linked (GlcNAc...) asparagine glycan is attached at Asn-229. The chain crosses the membrane as a helical span at residues Leu-230–Leu-250. Over Arg-251 to Ser-334 the chain is Cytoplasmic.

It belongs to the short-chain dehydrogenases/reductases (SDR) family. ERG27 subfamily. Binds to the short form of prolactin receptor. Post-translationally, phosphorylated. As to expression, most abundant in ovaries of pregnant animals.

The protein resides in the endoplasmic reticulum membrane. It catalyses the reaction 17beta-estradiol + NADP(+) = estrone + NADPH + H(+). The enzyme catalyses a 3beta-hydroxysteroid + NADP(+) = a 3-oxosteroid + NADPH + H(+). It carries out the reaction 4alpha-methyl-5alpha-cholest-7-en-3beta-ol + NADP(+) = 4alpha-methyl-5alpha-cholest-7-en-3-one + NADPH + H(+). The catalysed reaction is 4alpha-methyl-5alpha-cholest-8-en-3-one + NADPH + H(+) = 4alpha-methyl-5alpha-cholest-8-en-3beta-ol + NADP(+). It catalyses the reaction 3-dehydro-4alpha-methylzymosterol + NADPH + H(+) = 4alpha-methylzymosterol + NADP(+). The enzyme catalyses zymosterone + NADPH + H(+) = zymosterol + NADP(+). It carries out the reaction 5alpha-cholest-8-en-3-one + NADPH + H(+) = 5alpha-cholest-8-en-3beta-ol + NADP(+). The catalysed reaction is 5alpha-androstane-3beta,17beta-diol + NADP(+) = 17beta-hydroxy-5alpha-androstan-3-one + NADPH + H(+). It catalyses the reaction 5alpha-androstane-3alpha,17beta-diol + NADP(+) = 17beta-hydroxy-5alpha-androstan-3-one + NADPH + H(+). Its pathway is steroid biosynthesis; estrogen biosynthesis. It functions in the pathway steroid biosynthesis; zymosterol biosynthesis; zymosterol from lanosterol: step 5/6. Bifunctional enzyme involved in steroid-hormone metabolism and cholesterol biosynthesis. Catalyzes the NADP(H)-dependent reduction of estrogens and androgens and regulates the biological potency of these steroids. Converts estrone (E1) to a more potent estrogen, 17beta-estradiol (E2). Converts dihydrotestosterone (DHT) to an inactive form. Also participates in the post-squalene cholesterol biosynthesis, as a 3-ketosteroid reductase. This Rattus norvegicus (Rat) protein is 3-keto-steroid reductase/17-beta-hydroxysteroid dehydrogenase 7 (Hsd17b7).